A 576-amino-acid chain; its full sequence is 3-hydroxy-3-methylglutaryl coenzyme A reductase 1 (576 aa).

The segment at 1 to 35 (MDSRRRPSKPLLTSSGEVLHRKQASPVTDEDQIHR) is disordered. 2 helical membrane-spanning segments follow: residues 42-62 (ALPL…FSVA) and 89-109 (AIVS…IDFV). Catalysis depends on E255, which acts as the Charge relay system. N319 carries N-linked (GlcNAc...) asparagine glycosylation. Catalysis depends on charge relay system residues K387 and D463. A helical transmembrane segment spans residues 532-552 (LLATIVAGSVLAGELSLMSAI). H561 acts as the Proton donor in catalysis. N565 is a glycosylation site (N-linked (GlcNAc...) asparagine).

Belongs to the HMG-CoA reductase family. In terms of tissue distribution, expressed in trichomes, leaves, flowers, roots and stems.

The protein resides in the endoplasmic reticulum membrane. It is found in the plastid. It localises to the chloroplast membrane. The protein localises to the peroxisome membrane. It carries out the reaction (R)-mevalonate + 2 NADP(+) + CoA = (3S)-3-hydroxy-3-methylglutaryl-CoA + 2 NADPH + 2 H(+). Its pathway is metabolic intermediate biosynthesis; (R)-mevalonate biosynthesis; (R)-mevalonate from acetyl-CoA: step 3/3. In terms of biological role, catalyzes the synthesis of mevalonate, the specific precursor of all isoprenoid compounds present in plants. Component of the triterpene saponins (e.g. ginsenosides or panaxosides) and phytosterols biosynthetic pathways. Promotes triterpenes accumulation in roots. This Cannabis sativa (Hemp) protein is 3-hydroxy-3-methylglutaryl coenzyme A reductase 1.